A 512-amino-acid chain; its full sequence is ADP,ATP carrier protein 4 (512 aa).

11 helical membrane-spanning segments follow: residues 34-54 (ISKF…QNLI), 71-91 (ISFL…VIYV), 102-122 (IFYL…YVIF), 157-177 (FSLF…LLFW), 192-212 (FYPL…HFLE), 231-251 (FHTL…IVSI), 296-316 (LIAT…GPWK), 330-350 (AAFI…FVLL), 361-381 (FTSA…FFAV), 390-410 (LIIA…IGAI), and 476-496 (SISI…IWAT).

It belongs to the ADP/ATP translocase tlc family.

The protein localises to the cell membrane. In terms of biological role, provides the rickettsial cell with host ATP in exchange for rickettsial ADP. This is an obligate exchange system. This energy acquiring activity is an important component of rickettsial parasitism. The chain is ADP,ATP carrier protein 4 (tlcD) from Rickettsia prowazekii (strain Madrid E).